The following is a 148-amino-acid chain: Small ribosomal subunit protein uS13 (148 aa).

Belongs to the universal ribosomal protein uS13 family. In terms of assembly, part of the 30S ribosomal subunit. Forms a loose heterodimer with protein S19. Forms two bridges to the 50S subunit in the 70S ribosome.

In terms of biological role, located at the top of the head of the 30S subunit, it contacts several helices of the 16S rRNA. In the 70S ribosome it contacts the 23S rRNA (bridge B1a) and protein L5 of the 50S subunit (bridge B1b), connecting the 2 subunits; these bridges are implicated in subunit movement. This chain is Small ribosomal subunit protein uS13, found in Pyrococcus horikoshii (strain ATCC 700860 / DSM 12428 / JCM 9974 / NBRC 100139 / OT-3).